The sequence spans 380 residues: MSLNVFWFLPTHGDGRYLGSTEGARHVDYSYLQQVAQAAERQGFGGVLLPTGRSCEDSWLVAASLIPVTQRLKFLVALRPGVISPTIAARQAATLDRLSNGRALFNLVTGGDPEELAAEGLFLSHEERYEASAEFTHIWRRLLEGETVDFAGKHIQVKDAKLLYPPVQQPRPPLYFGGSSEAAQDLAAEQVDLYLTWGEPPEQVKEKLAEVRAKAAAQGREVRFGIRLHVIVRETTEEAWQAAERLISHLDEKTIADAQAALARFDSVGQQRMAALHGGKKDKLEISPNLWAGIGLVRGGAGTALVGDGPTVAERIKEYADLGIDTFILSGYPHLEEAYRVGELLFPHLDLAQQPTPLHAVSNAGEVVANRYVPRKVSQS.

The protein belongs to the SsuD family. Homotetramer.

It catalyses the reaction an alkanesulfonate + FMNH2 + O2 = an aldehyde + FMN + sulfite + H2O + 2 H(+). Its function is as follows. Catalyzes the desulfonation of aliphatic sulfonates. The protein is Alkanesulfonate monooxygenase of Pectobacterium atrosepticum (strain SCRI 1043 / ATCC BAA-672) (Erwinia carotovora subsp. atroseptica).